A 66-amino-acid chain; its full sequence is Protein KleD (66 aa).

The H-T-H motif DNA-binding region spans 33 to 52 (VAVRSGNEWQQVTKWVEPAR).

This Escherichia coli protein is Protein KleD (kleD).